The primary structure comprises 457 residues: PDZ and LIM domain protein 7 (457 aa).

In terms of domain architecture, PDZ spans 1–85; the sequence is MDSFKVVLEG…RLSLGLSRAQ (85 aa). Ser78 bears the Phosphoserine mark. 2 disordered regions span residues 81 to 132 and 186 to 226; these read LSRA…LSQN and FMKK…PWAV. Thr96 bears the Phosphothreonine mark. Arg103 is modified (asymmetric dimethylarginine). Phosphoserine is present on Ser111. Ser247 bears the Phosphoserine mark. 3 consecutive LIM zinc-binding domains span residues 280-338, 339-398, and 399-457; these read PVCH…VRYA, PSCA…MFGT, and KCRG…FSHV.

In terms of assembly, binds via its LIM zinc-binding 3 domain (LIM 3) domain to endocytic codes of INSR, but not with those of IGF1R, LDLR, TFRC, or EGFR. Interacts with various PKC isoforms through the LIM zinc-binding domains. Binds to RET in a phosphorylation-independent manner via its LIM zinc-binding 2 domain (LIM 2). Probably part of a complex with SHC and the RET dimer. Interacts with TPM2, TBX4 and TBX5. Interacts (via LIM domains) with SIPA1L1. Expressed in kidney, heart, brain, lung, and skeletal muscle. Overexpression results in the synthesis of an unidentified soluble factor which acts on cells in the osteoblast lineage causing them to differentiate and secrete BMP-2.

The protein resides in the cytoplasm. Its subcellular location is the cytoskeleton. Its function is as follows. May function as a scaffold on which the coordinated assembly of proteins can occur. May play a role as an adapter that, via its PDZ domain, localizes LIM-binding proteins to actin filaments of both skeletal muscle and nonmuscle tissues. Involved in both of the two fundamental mechanisms of bone formation, direct bone formation (e.g. embryonic flat bones mandible and cranium), and endochondral bone formation (e.g. embryonic long bone development). Plays a role during fracture repair. Involved in BMP6 signaling pathway. The protein is PDZ and LIM domain protein 7 (Pdlim7) of Rattus norvegicus (Rat).